A 613-amino-acid polypeptide reads, in one-letter code: Ethylene response sensor 1 (613 aa).

Transmembrane regions (helical) follow at residues 23-43, 58-78, and 95-115; these read ISDA…IYFV, FGAF…MFFM, and AVVS…LLSV. Residues Cys-65 and His-69 each contribute to the Cu cation site. Residues 158-307 enclose the GAF domain; it reads DRHTILRTTL…NVADQVAVAL (150 aa). In terms of domain architecture, Histidine kinase spans 350–589; it reads VMNHEMRTPM…SFIIRLGICN (240 aa). His-353 is subject to Phosphohistidine; by autocatalysis.

It belongs to the ethylene receptor family. In terms of assembly, homodimer; disulfide-linked. Heteromer with ETR1. Cu cation serves as cofactor. Autophosphorylated on both His and Ser residues in the presence of manganese. Loss of His autophosphorylation in the presence of both manganese and magnesium. As to expression, expressed in etiolated seedlings, leaves, stems, roots, flowers, embryos, anthers, carpels and ovules.

Its subcellular location is the endoplasmic reticulum membrane. It catalyses the reaction ATP + protein L-histidine = ADP + protein N-phospho-L-histidine.. Functionally, ethylene receptor related to bacterial two-component regulators. Acts as a redundant negative regulator of ethylene signaling. In Arabidopsis thaliana (Mouse-ear cress), this protein is Ethylene response sensor 1 (ERS1).